The chain runs to 272 residues: Soluble interferon gamma receptor OPG193 (272 aa).

Residues 1–13 (MRYIIILAVLFIN) form the signal peptide. Asn42, Asn150, and Asn267 each carry an N-linked (GlcNAc...) asparagine; by host glycan.

Belongs to the type II cytokine receptor family. In terms of assembly, homodimer. Interacts with host IFNG.

It localises to the secreted. Functionally, counteracts the antiviral effects of host IFN-gamma. Acts as a soluble IFN-gamma receptor and thus inhibits the interaction between host IFN-gamma and its receptor. This is Soluble interferon gamma receptor OPG193 (OPG193) from Bos taurus (Bovine).